The chain runs to 76 residues: Exodeoxyribonuclease 7 small subunit (76 aa).

The protein belongs to the XseB family. In terms of assembly, heterooligomer composed of large and small subunits.

Its subcellular location is the cytoplasm. It catalyses the reaction Exonucleolytic cleavage in either 5'- to 3'- or 3'- to 5'-direction to yield nucleoside 5'-phosphates.. Bidirectionally degrades single-stranded DNA into large acid-insoluble oligonucleotides, which are then degraded further into small acid-soluble oligonucleotides. The chain is Exodeoxyribonuclease 7 small subunit from Geobacillus thermodenitrificans (strain NG80-2).